The sequence spans 184 residues: Threonylcarbamoyl-AMP synthase (184 aa).

One can recognise a YrdC-like domain in the interval 1–184 (MNNLENIVEQ…IFTQHIFRQG (184 aa)).

This sequence belongs to the SUA5 family. TsaC subfamily.

The protein resides in the cytoplasm. It carries out the reaction L-threonine + hydrogencarbonate + ATP = L-threonylcarbamoyladenylate + diphosphate + H2O. In terms of biological role, required for the formation of a threonylcarbamoyl group on adenosine at position 37 (t(6)A37) in tRNAs that read codons beginning with adenine. Catalyzes the conversion of L-threonine, HCO(3)(-)/CO(2) and ATP to give threonylcarbamoyl-AMP (TC-AMP) as the acyladenylate intermediate, with the release of diphosphate. This chain is Threonylcarbamoyl-AMP synthase, found in Actinobacillus pleuropneumoniae serotype 7 (strain AP76).